A 55-amino-acid chain; its full sequence is ATP synthase F(0) complex subunit 8 (55 aa).

A helical membrane pass occupies residues Leu-4–Ile-24.

Belongs to the ATPase protein 8 family. In terms of assembly, component of the ATP synthase complex composed at least of ATP5F1A/subunit alpha, ATP5F1B/subunit beta, ATP5MC1/subunit c (homooctomer), MT-ATP6/subunit a, MT-ATP8/subunit 8, ATP5ME/subunit e, ATP5MF/subunit f, ATP5MG/subunit g, ATP5MK/subunit k, ATP5MJ/subunit j, ATP5F1C/subunit gamma, ATP5F1D/subunit delta, ATP5F1E/subunit epsilon, ATP5PF/subunit F6, ATP5PB/subunit b, ATP5PD/subunit d, ATP5PO/subunit OSCP. ATP synthase complex consists of a soluble F(1) head domain (subunits alpha(3) and beta(3)) - the catalytic core - and a membrane F(0) domain - the membrane proton channel (subunits c, a, 8, e, f, g, k and j). These two domains are linked by a central stalk (subunits gamma, delta, and epsilon) rotating inside the F1 region and a stationary peripheral stalk (subunits F6, b, d, and OSCP).

Its subcellular location is the mitochondrion membrane. Subunit 8, of the mitochondrial membrane ATP synthase complex (F(1)F(0) ATP synthase or Complex V) that produces ATP from ADP in the presence of a proton gradient across the membrane which is generated by electron transport complexes of the respiratory chain. ATP synthase complex consist of a soluble F(1) head domain - the catalytic core - and a membrane F(1) domain - the membrane proton channel. These two domains are linked by a central stalk rotating inside the F(1) region and a stationary peripheral stalk. During catalysis, ATP synthesis in the catalytic domain of F(1) is coupled via a rotary mechanism of the central stalk subunits to proton translocation. In vivo, can only synthesize ATP although its ATP hydrolase activity can be activated artificially in vitro. Part of the complex F(0) domain. The polypeptide is ATP synthase F(0) complex subunit 8 (Dicentrarchus labrax (European seabass)).